A 159-amino-acid chain; its full sequence is Ribosomal RNA large subunit methyltransferase H (159 aa).

S-adenosyl-L-methionine is bound by residues Leu76, Gly108, and 127–132 (LSDMTF).

This sequence belongs to the RNA methyltransferase RlmH family. As to quaternary structure, homodimer.

The protein localises to the cytoplasm. The catalysed reaction is pseudouridine(1915) in 23S rRNA + S-adenosyl-L-methionine = N(3)-methylpseudouridine(1915) in 23S rRNA + S-adenosyl-L-homocysteine + H(+). In terms of biological role, specifically methylates the pseudouridine at position 1915 (m3Psi1915) in 23S rRNA. The protein is Ribosomal RNA large subunit methyltransferase H of Acetivibrio thermocellus (strain ATCC 27405 / DSM 1237 / JCM 9322 / NBRC 103400 / NCIMB 10682 / NRRL B-4536 / VPI 7372) (Clostridium thermocellum).